The following is a 312-amino-acid chain: Acetyl-coenzyme A carboxylase carboxyl transferase subunit beta (312 aa).

The CoA carboxyltransferase N-terminal domain occupies 24 to 293 (LWIKCPDSGQ…VEHAKPAPQL (270 aa)). Residues 286 to 312 (HAKPAPQLPPPAKPAETAEAPAVATSA) form a disordered region. The span at 299-312 (PAETAEAPAVATSA) shows a compositional bias: low complexity.

This sequence belongs to the AccD/PCCB family. Acetyl-CoA carboxylase is a heterohexamer composed of biotin carboxyl carrier protein (AccB), biotin carboxylase (AccC) and two subunits each of ACCase subunit alpha (AccA) and ACCase subunit beta (AccD).

It localises to the cytoplasm. It catalyses the reaction N(6)-carboxybiotinyl-L-lysyl-[protein] + acetyl-CoA = N(6)-biotinyl-L-lysyl-[protein] + malonyl-CoA. The protein operates within lipid metabolism; malonyl-CoA biosynthesis; malonyl-CoA from acetyl-CoA: step 1/1. Functionally, component of the acetyl coenzyme A carboxylase (ACC) complex. Biotin carboxylase (BC) catalyzes the carboxylation of biotin on its carrier protein (BCCP) and then the CO(2) group is transferred by the transcarboxylase to acetyl-CoA to form malonyl-CoA. The protein is Acetyl-coenzyme A carboxylase carboxyl transferase subunit beta of Bradyrhizobium sp. (strain ORS 278).